The sequence spans 365 residues: Testis-specific serine/threonine-protein kinase 1 (365 aa).

Residues 12 to 272 form the Protein kinase domain; that stretch reads YIMGINLGEG…IDEILNHCWV (261 aa). ATP is bound by residues 18–26 and Lys41; that span reads LGEGSYAKV. Asp136 serves as the catalytic Proton acceptor. At Thr174 the chain carries Phosphothreonine. The segment at 282–365 is disordered; the sequence is GAINKEGESS…HPQQPSETHT (84 aa). Residues 303 to 330 are compositionally biased toward basic and acidic residues; sequence GADKKSATKLEPREEARSEARSESKPQE. Polar residues predominate over residues 331-347; that stretch reads DTLQVVRQSENVGLSSE.

Belongs to the protein kinase superfamily. CAMK Ser/Thr protein kinase family. In terms of assembly, interacts with TSSK2. Interacts with HSP90; this interaction stabilizes TSSK1. Requires Mg(2+) as cofactor. Post-translationally, autophosphorylated. In terms of processing, ubiquitinated; HSP90 activity negatively regulates ubiquitination and degradation. As to expression, testis-specific. Expressed only in postmeiotic spermatids at the final stages of cytodifferentiation in the seminiferous tubules (at protein level). Not detected in released sperms in the lumen of the seminiferous tubules and the epididymis.

Its subcellular location is the cytoplasm. The protein resides in the cytoplasmic vesicle. It is found in the secretory vesicle. The protein localises to the acrosome. It localises to the cell projection. Its subcellular location is the cilium. The protein resides in the flagellum. It carries out the reaction L-seryl-[protein] + ATP = O-phospho-L-seryl-[protein] + ADP + H(+). The catalysed reaction is L-threonyl-[protein] + ATP = O-phospho-L-threonyl-[protein] + ADP + H(+). Activated by phosphorylation on Thr-174, potentially by autophosphorylation. Functionally, testis-specific serine/threonine-protein kinase required during spermatid development. Phosphorylates 'Ser-281' of TSKS. Involved in the late stages of spermatogenesis, during the reconstruction of the cytoplasm. During spermatogenesis, required for the transformation of a ring-shaped structure around the base of the flagellum originating from the chromatoid body. This is Testis-specific serine/threonine-protein kinase 1 (Tssk1b) from Mus musculus (Mouse).